The following is a 296-amino-acid chain: Transcription factor MYB72 (296 aa).

HTH myb-type domains are found at residues 11 to 63 (KNKV…INYL) and 64 to 118 (RPDV…KKRL). 2 consecutive DNA-binding regions (H-T-H motif) follow at residues 39-63 (WRSL…INYL) and 91-114 (WSKI…NTHL). A disordered region spans residues 118–144 (LTPSSSSSSLSSTHDQSTKADHDKNCD). Over residues 133-144 (QSTKADHDKNCD) the composition is skewed to basic and acidic residues.

Interacts with EIL3.

Its subcellular location is the nucleus. Involved in metal ions homeostasis, including iron ions (Fe) acquisition, via the regulation of NAS4 and NAS2 genes expression. Necessary for plant survival in alkaline soil where iron availability is greatly restricted. Involved in the up-regulation of several biosynthesis genes of secondary metabolites involved in iron uptake under conditions of iron deficiency. Triggers tolerance to nickel (Ni) and zinc (Zn) ions. Required in the roots during early signaling steps of rhizobacteria-mediated (e.g. P.fluorescens WCS417r) and beneficial fungi-mediated (e.g. T.asperellum T34) broad-spectrum induced systemic resistance (ISR) against several pathogens (e.g. P.syringae pv tomato, H.parasitica, P.cucumerina, A.brassicicola and B.cinerea) and implying enhanced callose deposition. Required for the induction of some genes (e.g. BGLU42) upon rhizobacteria-mediated ISR. The polypeptide is Transcription factor MYB72 (Arabidopsis thaliana (Mouse-ear cress)).